The following is a 133-amino-acid chain: ATP synthase epsilon chain, chloroplastic (133 aa).

It belongs to the ATPase epsilon chain family. In terms of assembly, F-type ATPases have 2 components, CF(1) - the catalytic core - and CF(0) - the membrane proton channel. CF(1) has five subunits: alpha(3), beta(3), gamma(1), delta(1), epsilon(1). CF(0) has three main subunits: a, b and c.

It is found in the plastid. The protein localises to the chloroplast thylakoid membrane. In terms of biological role, produces ATP from ADP in the presence of a proton gradient across the membrane. The chain is ATP synthase epsilon chain, chloroplastic from Eucalyptus globulus subsp. globulus (Tasmanian blue gum).